Reading from the N-terminus, the 432-residue chain is Adenosylhomocysteinase (432 aa).

Serine 2 carries the N-acetylserine modification. Substrate contacts are provided by threonine 57, aspartate 131, and glutamate 156. The residue at position 183 (serine 183) is a Phosphoserine. The NAD binding stretch occupies residues 183-350 (SVTKSKFDNL…EGRLVNLGCA (168 aa)). Lysine 186 and aspartate 190 together coordinate substrate. Position 186 is an N6-(2-hydroxyisobutyryl)lysine (lysine 186). Tyrosine 193 carries the post-translational modification Phosphotyrosine.

The protein belongs to the adenosylhomocysteinase family. As to quaternary structure, homotetramer. Interaction with AHCYL1. It depends on NAD(+) as a cofactor.

It localises to the cytoplasm. The protein localises to the melanosome. The protein resides in the nucleus. It is found in the endoplasmic reticulum. It carries out the reaction S-adenosyl-L-homocysteine + H2O = L-homocysteine + adenosine. It functions in the pathway amino-acid biosynthesis; L-homocysteine biosynthesis; L-homocysteine from S-adenosyl-L-homocysteine: step 1/1. In terms of biological role, catalyzes the hydrolysis of S-adenosyl-L-homocysteine to form adenosine and homocysteine. Binds copper ions. In Macaca fascicularis (Crab-eating macaque), this protein is Adenosylhomocysteinase (AHCY).